The chain runs to 267 residues: Glutamate 5-kinase (267 aa).

Residue K15 coordinates ATP. Substrate-binding residues include S55, D142, and N158. Residues S178–D179 and T220–K226 contribute to the ATP site.

It belongs to the glutamate 5-kinase family.

Its subcellular location is the cytoplasm. It catalyses the reaction L-glutamate + ATP = L-glutamyl 5-phosphate + ADP. It participates in amino-acid biosynthesis; L-proline biosynthesis; L-glutamate 5-semialdehyde from L-glutamate: step 1/2. Its function is as follows. Catalyzes the transfer of a phosphate group to glutamate to form L-glutamate 5-phosphate. The polypeptide is Glutamate 5-kinase (Ligilactobacillus salivarius (strain UCC118) (Lactobacillus salivarius)).